The sequence spans 313 residues: Putative glycosyltransferase ORF313 (313 aa).

This sequence belongs to the glycosyltransferase group 1 family. Glycosyltransferase 4 subfamily.

This chain is Putative glycosyltransferase ORF313, found in Acidianus hospitalis (AFV-1).